The following is a 116-amino-acid chain: U16-barytoxin-Tl1d (116 aa).

Positions methionine 1–alanine 20 are cleaved as a signal peptide. Positions asparagine 21 to arginine 74 are excised as a propeptide. Intrachain disulfides connect cysteine 75–cysteine 90, cysteine 82–cysteine 95, and cysteine 89–cysteine 110.

The protein belongs to the neurotoxin 14 (magi-1) family. 06 (ICK-Trit) subfamily. Expressed by the venom gland.

The protein localises to the secreted. Its function is as follows. Ion channel inhibitor. The protein is U16-barytoxin-Tl1d of Trittame loki (Brush-footed trapdoor spider).